We begin with the raw amino-acid sequence, 378 residues long: UPF0754 membrane protein BCG9842_B4423 (378 aa).

A helical transmembrane segment spans residues 357–377; the sequence is YLGALLGGIIGLVQGLLLLFL.

Belongs to the UPF0754 family.

The protein resides in the cell membrane. The polypeptide is UPF0754 membrane protein BCG9842_B4423 (Bacillus cereus (strain G9842)).